A 293-amino-acid chain; its full sequence is Probable xyloglucan endotransglucosylase/hydrolase protein B (293 aa).

The signal sequence occupies residues 1 to 21 (MASSLLILCLVLVSLASSALC). Residues 23–220 (APRRPVDVPF…WSKAPFVAEY (198 aa)) form the GH16 domain. Glutamate 106 (nucleophile) is an active-site residue. The active-site Proton donor is the glutamate 110. Glutamate 110 lines the xyloglucan pocket. Asparagine 114 is a glycosylation site (N-linked (GlcNAc...) asparagine). Xyloglucan-binding positions include 123–125 (QTN), 133–135 (DRE), 199–200 (DW), and glycine 204. Intrachain disulfides connect cysteine 228/cysteine 237 and cysteine 274/cysteine 287. Residue arginine 279 coordinates xyloglucan.

This sequence belongs to the glycosyl hydrolase 16 family. XTH group 1 subfamily. Contains at least one intrachain disulfide bond essential for its enzymatic activity. As to expression, predominantly expressed in the phloem fibers of growing internodes. Weakly or not expressed in the xylem. In the internode, it is expressed closer to the bottom of the internode compared to XTHA.

It localises to the secreted. The protein resides in the cell wall. The protein localises to the extracellular space. Its subcellular location is the apoplast. It catalyses the reaction breaks a beta-(1-&gt;4) bond in the backbone of a xyloglucan and transfers the xyloglucanyl segment on to O-4 of the non-reducing terminal glucose residue of an acceptor, which can be a xyloglucan or an oligosaccharide of xyloglucan.. Its function is as follows. Catalyzes xyloglucan endohydrolysis (XEH) and/or endotransglycosylation (XET). Cleaves and religates xyloglucan polymers, an essential constituent of the primary cell wall, and thereby participates in cell wall construction of growing tissues. The protein is Probable xyloglucan endotransglucosylase/hydrolase protein B (XTHB) of Phaseolus angularis (Azuki bean).